A 341-amino-acid polypeptide reads, in one-letter code: Putative UPF0607 protein ENSP00000383144 (341 aa).

Disordered regions lie at residues 70–131 (RLPK…NPRP) and 218–279 (LMVG…PPAK). Basic and acidic residues predominate over residues 72–101 (PKTEVRAEEPKEATEVKDQVETQEQEDNKR). Positions 108–127 (EAASTSRPLETQGNLTSSWY) are enriched in polar residues. Positions 243–252 (AGHRSHKRKL) are enriched in basic residues.

The protein belongs to the UPF0607 family.

The sequence is that of Putative UPF0607 protein ENSP00000383144 from Homo sapiens (Human).